The following is a 597-amino-acid chain: Aspartate--tRNA(Asp/Asn) ligase (597 aa).

Residue glutamate 182 participates in L-aspartate binding. The segment at 206–209 is aspartate; it reads QLFK. L-aspartate is bound at residue arginine 228. Residues 228 to 230 and glutamine 237 each bind ATP; that span reads RDE. Position 455 (histidine 455) interacts with L-aspartate. Residue glutamate 489 participates in ATP binding. Arginine 496 lines the L-aspartate pocket. ATP is bound at residue 541-544; the sequence is GFDR.

This sequence belongs to the class-II aminoacyl-tRNA synthetase family. Type 1 subfamily. Homodimer.

Its subcellular location is the cytoplasm. The enzyme catalyses tRNA(Asx) + L-aspartate + ATP = L-aspartyl-tRNA(Asx) + AMP + diphosphate. Its function is as follows. Aspartyl-tRNA synthetase with relaxed tRNA specificity since it is able to aspartylate not only its cognate tRNA(Asp) but also tRNA(Asn). Reaction proceeds in two steps: L-aspartate is first activated by ATP to form Asp-AMP and then transferred to the acceptor end of tRNA(Asp/Asn). This is Aspartate--tRNA(Asp/Asn) ligase from Desulfosudis oleivorans (strain DSM 6200 / JCM 39069 / Hxd3) (Desulfococcus oleovorans).